The sequence spans 201 residues: Putative 3-methyladenine DNA glycosylase (201 aa).

It belongs to the DNA glycosylase MPG family.

The protein is Putative 3-methyladenine DNA glycosylase of Nitrosococcus oceani (strain ATCC 19707 / BCRC 17464 / JCM 30415 / NCIMB 11848 / C-107).